A 222-amino-acid polypeptide reads, in one-letter code: MSLIGKLFGTGGKGAKGPSPQEAIQKLRDTEEMLTKKQEFLEKKIEQELVTAKKHGTKNKRAALQALKRKKRYEKQLAQIDGTLSTIEFQREALENANTNTEVLKNMGFAAKAMKAAHDNMDIEKVDELMQDIADQQELAQEISDAISKPVGFGEDFDEDELMAELEELEQEELDKNLLEVQGPETVPLPNVPAAVLPAKPVKKKQEEDDDDMRELENWATA.

2 disordered regions span residues 1-21 (MSLIGKLFGTGGKGAKGPSPQ) and 183-222 (GPETVPLPNVPAAVLPAKPVKKKQEEDDDDMRELENWATA). Residues 21-182 (QEAIQKLRDT…ELDKNLLEVQ (162 aa)) are a coiled coil. The span at 188 to 200 (PLPNVPAAVLPAK) shows a compositional bias: low complexity.

Belongs to the SNF7 family. In terms of assembly, probable core component of the endosomal sorting required for transport complex III (ESCRT-III). ESCRT-III components are thought to multimerize to form a flat lattice on the perimeter membrane of the endosome.

It is found in the cytoplasm. Its subcellular location is the cytosol. It localises to the late endosome membrane. The protein localises to the midbody. Probable core component of the endosomal sorting required for transport complex III (ESCRT-III) which is involved in multivesicular bodies (MVBs) formation and sorting of endosomal cargo proteins into MVBs. MVBs contain intraluminal vesicles (ILVs) that are generated by invagination and scission from the limiting membrane of the endosome and mostly are delivered to lysosomes enabling degradation of membrane proteins, such as stimulated growth factor receptors, lysosomal enzymes and lipids. This Xenopus tropicalis (Western clawed frog) protein is Charged multivesicular body protein 4b (chmp4b).